A 78-amino-acid chain; its full sequence is Beta-defensin 12 (78 aa).

The N-terminal stretch at 1–27 (MALSRGTFYFGLALFFIVVELPSGSWA) is a signal peptide. Cystine bridges form between Cys-46–Cys-73, Cys-53–Cys-67, and Cys-57–Cys-74.

It belongs to the beta-defensin family.

The protein localises to the secreted. Has antibacterial activity. The protein is Beta-defensin 12 (Defb12) of Rattus norvegicus (Rat).